The chain runs to 317 residues: L-lactate dehydrogenase (317 aa).

Residues Val-16, Asp-37, Arg-42, Tyr-67, and 81-82 contribute to the NAD(+) site; that span reads GA. Residues Gln-84 and Arg-90 each coordinate substrate. NAD(+) is bound by residues Ser-103, 120–122, and Ser-145; that span reads AAN. Residue 122-125 coordinates substrate; that stretch reads NPVD. 150-153 is a binding site for substrate; the sequence is DSAR. The Proton acceptor role is filled by His-177. Phosphotyrosine is present on Tyr-221. Thr-230 is a binding site for substrate.

Belongs to the LDH/MDH superfamily. LDH family. In terms of assembly, homotetramer.

The protein localises to the cytoplasm. The catalysed reaction is (S)-lactate + NAD(+) = pyruvate + NADH + H(+). It participates in fermentation; pyruvate fermentation to lactate; (S)-lactate from pyruvate: step 1/1. In terms of biological role, catalyzes the conversion of lactate to pyruvate. The sequence is that of L-lactate dehydrogenase from Limosilactobacillus fermentum (strain NBRC 3956 / LMG 18251) (Lactobacillus fermentum).